We begin with the raw amino-acid sequence, 407 residues long: Resuscitation-promoting factor RpfA (407 aa).

Residues Met1–Ala33 form the signal peptide. Disordered regions lie at residues Val142 to Ala253 and Leu271 to Pro371. Positions Pro148–Pro159 are enriched in pro residues. A compositionally biased stretch (low complexity) spans Val160–Pro170. A compositionally biased stretch (pro residues) spans Leu171–Pro193. 2 tandem repeats follow at residues Ala178–Pro185 and Ala186–Pro193. The segment at Ala178–Pro359 is 12 X 8 AA approximate repeats of A-P-A-D-L-A-P-P. Residues Ala194–Pro210 show a composition bias toward low complexity. Positions Leu211 to Pro249 are enriched in pro residues. 10 repeat units span residues Ala218–Pro225, Ala226–Pro233, Ala240–Pro247, Ala248–Pro255, Ala274–Pro281, Ala287–Pro294, Ala295–Pro302, Ala303–Pro310, Ala311–Pro318, and Gln353–Pro359. The segment covering Ala274 to Ala292 has biased composition (low complexity). Composition is skewed to pro residues over residues Pro293–Pro312 and Pro350–Gly361.

This sequence belongs to the transglycosylase family. Rpf subfamily.

Factor that stimulates resuscitation of dormant cells. Has peptidoglycan (PG) hydrolytic activity. The protein is Resuscitation-promoting factor RpfA (rpfA) of Mycobacterium tuberculosis (strain CDC 1551 / Oshkosh).